A 485-amino-acid chain; its full sequence is ATP synthase subunit beta (485 aa).

170–177 contacts ATP; it reads GGAGVGKT.

It belongs to the ATPase alpha/beta chains family. F-type ATPases have 2 components, CF(1) - the catalytic core - and CF(0) - the membrane proton channel. CF(1) has five subunits: alpha(3), beta(3), gamma(1), delta(1), epsilon(1). CF(0) has three main subunits: a(1), b(2) and c(9-12). The alpha and beta chains form an alternating ring which encloses part of the gamma chain. CF(1) is attached to CF(0) by a central stalk formed by the gamma and epsilon chains, while a peripheral stalk is formed by the delta and b chains.

It localises to the cell membrane. It catalyses the reaction ATP + H2O + 4 H(+)(in) = ADP + phosphate + 5 H(+)(out). Functionally, produces ATP from ADP in the presence of a proton gradient across the membrane. The catalytic sites are hosted primarily by the beta subunits. This chain is ATP synthase subunit beta, found in Salinispora arenicola (strain CNS-205).